The primary structure comprises 182 residues: uncharacterized protein (182 aa).

This is an uncharacterized protein from Haemophilus influenzae (strain ATCC 51907 / DSM 11121 / KW20 / Rd).